The following is a 310-amino-acid chain: HPr kinase/phosphorylase (310 aa).

Active-site residues include histidine 138 and lysine 159. Glycine 153 to serine 160 is a binding site for ATP. Residue serine 160 participates in Mg(2+) binding. The Proton acceptor; for phosphorylation activity. Proton donor; for dephosphorylation activity role is filled by aspartate 177. The important for the catalytic mechanism of both phosphorylation and dephosphorylation stretch occupies residues leucine 201–asparagine 210. Glutamate 202 lines the Mg(2+) pocket. The active site involves arginine 243. Residues proline 264 to arginine 269 form an important for the catalytic mechanism of dephosphorylation region.

The protein belongs to the HPrK/P family. In terms of assembly, homohexamer. It depends on Mg(2+) as a cofactor.

It carries out the reaction [HPr protein]-L-serine + ATP = [HPr protein]-O-phospho-L-serine + ADP + H(+). It catalyses the reaction [HPr protein]-O-phospho-L-serine + phosphate + H(+) = [HPr protein]-L-serine + diphosphate. In terms of biological role, catalyzes the ATP- as well as the pyrophosphate-dependent phosphorylation of a specific serine residue in HPr, a phosphocarrier protein of the phosphoenolpyruvate-dependent sugar phosphotransferase system (PTS). HprK/P also catalyzes the pyrophosphate-producing, inorganic phosphate-dependent dephosphorylation (phosphorolysis) of seryl-phosphorylated HPr (P-Ser-HPr). The two antagonistic activities of HprK/P are regulated by several intracellular metabolites, which change their concentration in response to the absence or presence of rapidly metabolisable carbon sources (glucose, fructose, etc.) in the growth medium. Also phosphorylates/dephosphorylates the HPr-like catabolite repression protein crh on a specific serine residue. Therefore, by controlling the phosphorylation state of HPr and crh, HPrK/P is a sensor enzyme that plays a major role in the regulation of carbon metabolism and sugar transport: it mediates carbon catabolite repression (CCR), and regulates PTS-catalyzed carbohydrate uptake and inducer exclusion. In Bacillus velezensis (strain DSM 23117 / BGSC 10A6 / LMG 26770 / FZB42) (Bacillus amyloliquefaciens subsp. plantarum), this protein is HPr kinase/phosphorylase.